The primary structure comprises 310 residues: 4-hydroxyproline 2-epimerase (310 aa).

Cys-88 functions as the Proton acceptor in the catalytic mechanism. Substrate contacts are provided by residues 89–90, His-208, and Asp-232; that span reads GH. The active-site Proton donor is Cys-236. Residue 237-238 participates in substrate binding; sequence GT.

Belongs to the proline racemase family.

It catalyses the reaction trans-4-hydroxy-L-proline = cis-4-hydroxy-D-proline. Functionally, catalyzes the epimerization of trans-4-hydroxy-L-proline (t4LHyp) to cis-4-hydroxy-D-proline (c4DHyp). Is likely involved in a degradation pathway that converts t4LHyp to alpha-ketoglutarate. Displays no proline racemase activity. This chain is 4-hydroxyproline 2-epimerase, found in Acinetobacter baumannii (strain AYE).